Here is a 353-residue protein sequence, read N- to C-terminus: UPF0283 membrane protein YcjF (353 aa).

Over residues 1-19 the composition is skewed to basic and acidic residues; that stretch reads MSEPLKPRIDFAEPLKEEP. The segment at 1–35 is disordered; sequence MSEPLKPRIDFAEPLKEEPTSAFKAQQTFSEAESR. 3 helical membrane passes run 70–90, 100–120, and 213–233; these read MVMG…VQWT, VALG…GSVV, and ESTL…FIAW.

It belongs to the UPF0283 family.

The protein resides in the cell inner membrane. This chain is UPF0283 membrane protein YcjF, found in Salmonella paratyphi A (strain AKU_12601).